The chain runs to 454 residues: UPF0210 protein Mhun_2657 (454 aa).

This sequence belongs to the UPF0210 family.

This is UPF0210 protein Mhun_2657 from Methanospirillum hungatei JF-1 (strain ATCC 27890 / DSM 864 / NBRC 100397 / JF-1).